Reading from the N-terminus, the 283-residue chain is MNWTGLYTLLSGVNRHSTAIGRVWLSVIFIFRIMVLVVAAESVWGDEKSSFICNTLQPGCNSVCYDHFFPISHVRLWSLQLILVSTPALLVAMHVAHQQHIEKKMLRLEGHGDPLHLEEVKRHKVHISGTLWWTYVISVVFRLLFEAVFMYVFYLLYPGYAMVRLVKCEAFPCPNTVDCFVSRPTEKTVFTVFMLAASGICIILNVAEVVYLIIRACARRAQRRSNPPSRKGSGFGHRLSPEYKQNEINKLLSEQDGSLKDILRRSPGTGAGLAEKSDRCSAC.

Residues 1 to 22 (MNWTGLYTLLSGVNRHSTAIGR) lie on the Cytoplasmic side of the membrane. The helical transmembrane segment at 23-45 (VWLSVIFIFRIMVLVVAAESVWG) threads the bilayer. Residues 46 to 75 (DEKSSFICNTLQPGCNSVCYDHFFPISHVR) lie on the Extracellular side of the membrane. The helical transmembrane segment at 76 to 95 (LWSLQLILVSTPALLVAMHV) threads the bilayer. Over 96 to 130 (AHQQHIEKKMLRLEGHGDPLHLEEVKRHKVHISGT) the chain is Cytoplasmic. A helical membrane pass occupies residues 131 to 153 (LWWTYVISVVFRLLFEAVFMYVF). The Extracellular portion of the chain corresponds to 154–191 (YLLYPGYAMVRLVKCEAFPCPNTVDCFVSRPTEKTVFT). The chain crosses the membrane as a helical span at residues 192–214 (VFMLAASGICIILNVAEVVYLII). Over 215-283 (RACARRAQRR…AEKSDRCSAC (69 aa)) the chain is Cytoplasmic. Phosphoserine is present on residues serine 233, serine 258, serine 266, and serine 277.

The protein belongs to the connexin family. Beta-type (group I) subfamily. As to quaternary structure, a connexon is composed of a hexamer of connexins. Interacts with CNST.

The protein localises to the cell membrane. It localises to the cell junction. It is found in the gap junction. One gap junction consists of a cluster of closely packed pairs of transmembrane channels, the connexons, through which materials of low MW diffuse from one cell to a neighboring cell. The chain is Gap junction beta-1 protein (Gjb1) from Mus musculus (Mouse).